A 179-amino-acid polypeptide reads, in one-letter code: dCTP deaminase (179 aa).

DCTP-binding positions include 101–106 (RSTLAR) and Asp117. Glu127 functions as the Proton donor/acceptor in the catalytic mechanism. Gln165 contributes to the dCTP binding site.

It belongs to the dCTP deaminase family. In terms of assembly, homotrimer.

The enzyme catalyses dCTP + H2O + H(+) = dUTP + NH4(+). Its pathway is pyrimidine metabolism; dUMP biosynthesis; dUMP from dCTP (dUTP route): step 1/2. Its function is as follows. Catalyzes the deamination of dCTP to dUTP. In Caldivirga maquilingensis (strain ATCC 700844 / DSM 13496 / JCM 10307 / IC-167), this protein is dCTP deaminase.